The chain runs to 185 residues: Ribosome-recycling factor (185 aa).

It belongs to the RRF family.

The protein resides in the cytoplasm. Functionally, responsible for the release of ribosomes from messenger RNA at the termination of protein biosynthesis. May increase the efficiency of translation by recycling ribosomes from one round of translation to another. The sequence is that of Ribosome-recycling factor from Pseudomonas savastanoi pv. phaseolicola (strain 1448A / Race 6) (Pseudomonas syringae pv. phaseolicola (strain 1448A / Race 6)).